A 129-amino-acid polypeptide reads, in one-letter code: uncharacterized protein (129 aa).

It to M.pneumoniae MPN_376 N-terminal region.

This is an uncharacterized protein from Mycoplasma pneumoniae (strain ATCC 29342 / M129 / Subtype 1) (Mycoplasmoides pneumoniae).